Here is a 105-residue protein sequence, read N- to C-terminus: Ferredoxin (105 aa).

The [3Fe-4S] cluster site is built by C8 and C16. The [4Fe-4S] cluster site is built by C20, C39, C42, and C45. The region spanning 30–59 is the 4Fe-4S ferredoxin-type domain; the sequence is RSLYIHPDECVDCGACEPVCPVEAIFYEDD. A [3Fe-4S] cluster-binding site is contributed by C49.

It depends on [4Fe-4S] cluster as a cofactor. [3Fe-4S] cluster is required as a cofactor.

Functionally, ferredoxins are iron-sulfur proteins that transfer electrons in a wide variety of metabolic reactions. Its function is as follows. Putative electron transport protein for the cytochrome P-450SOY system from the same organism. The polypeptide is Ferredoxin (Streptomyces griseus).